Reading from the N-terminus, the 374-residue chain is Ribosomal RNA large subunit methyltransferase G (374 aa).

Belongs to the methyltransferase superfamily. RlmG family.

The protein localises to the cytoplasm. The enzyme catalyses guanosine(1835) in 23S rRNA + S-adenosyl-L-methionine = N(2)-methylguanosine(1835) in 23S rRNA + S-adenosyl-L-homocysteine + H(+). Its function is as follows. Specifically methylates the guanine in position 1835 (m2G1835) of 23S rRNA. In Pseudomonas putida (strain ATCC 47054 / DSM 6125 / CFBP 8728 / NCIMB 11950 / KT2440), this protein is Ribosomal RNA large subunit methyltransferase G.